Here is a 206-residue protein sequence, read N- to C-terminus: Cell division protein SepF (206 aa).

The segment covering 31 to 53 has biased composition (basic and acidic residues); the sequence is EEKERRKTERQEQRQAVKQEKRT. The tract at residues 31–81 is disordered; sequence EEKERRKTERQEQRQAVKQEKRTFPSQRPAFSEEAPTSSSSKLSAASGSSD. A compositionally biased stretch (low complexity) spans 60–80; it reads AFSEEAPTSSSSKLSAASGSS.

It belongs to the SepF family. In terms of assembly, homodimer. Interacts with FtsZ.

It localises to the cytoplasm. Functionally, cell division protein that is part of the divisome complex and is recruited early to the Z-ring. Probably stimulates Z-ring formation, perhaps through the cross-linking of FtsZ protofilaments. Its function overlaps with FtsA. The chain is Cell division protein SepF from Lachnoclostridium phytofermentans (strain ATCC 700394 / DSM 18823 / ISDg) (Clostridium phytofermentans).